We begin with the raw amino-acid sequence, 744 residues long: Cullin-3 (744 aa).

Residues 677–736 (MELSAIIVRIMKTEGKLSHQQLLERTTKRTQSRLSLTPSILKRSIQLLIEKEYIQRNADD) enclose the Cullin neddylation domain. Lys-688 is covalently cross-linked (Glycyl lysine isopeptide (Lys-Gly) (interchain with G-Cter in NEDD8)).

This sequence belongs to the cullin family. As to quaternary structure, component of a ubiquitin-protein ligase complex consisting of the cullin CUL3, the linker protein ELC1, the substrate receptor ELA1, and the RING protein HRT1. In terms of processing, neddylated; enhancing the ubiquitin-ligase activity.

The protein operates within protein modification; protein ubiquitination. Its function is as follows. As part of the CRL3 E3 ubiquitin ligase complex; polyubiquitylates monoubiquitylated RNA polymerase II subunit RPO21 to trigger its proteolysis; plays a role in global genomic repair. This Saccharomyces cerevisiae (strain ATCC 204508 / S288c) (Baker's yeast) protein is Cullin-3 (CUL3).